The primary structure comprises 172 residues: Large ribosomal subunit protein uL10 (172 aa).

This sequence belongs to the universal ribosomal protein uL10 family. As to quaternary structure, part of the ribosomal stalk of the 50S ribosomal subunit. The N-terminus interacts with L11 and the large rRNA to form the base of the stalk. The C-terminus forms an elongated spine to which L12 dimers bind in a sequential fashion forming a multimeric L10(L12)X complex.

In terms of biological role, forms part of the ribosomal stalk, playing a central role in the interaction of the ribosome with GTP-bound translation factors. The protein is Large ribosomal subunit protein uL10 of Rhizobium rhizogenes (strain K84 / ATCC BAA-868) (Agrobacterium radiobacter).